Consider the following 101-residue polypeptide: Large ribosomal subunit protein bL20 (101 aa).

This sequence belongs to the bacterial ribosomal protein bL20 family.

Binds directly to 23S ribosomal RNA and is necessary for the in vitro assembly process of the 50S ribosomal subunit. It is not involved in the protein synthesizing functions of that subunit. The chain is Large ribosomal subunit protein bL20 (rplT) from Carsonella ruddii (strain PV).